The sequence spans 475 residues: Splicing factor U2AF 65 kDa subunit (475 aa).

Residues 1–90 form a disordered region; sequence MSDFDEFERQ…RHEKKKKVRK (90 aa). At serine 2 the chain carries N-acetylserine. Residue serine 2 is modified to Phosphoserine. The interval 2 to 93 is required for interaction with PRPF19; the sequence is SDFDEFERQL…KKKKVRKYWD (92 aa). Over residues 7–22 the composition is skewed to basic and acidic residues; sequence FERQLNENKQERDKEN. Lysine 15 carries the 5-hydroxylysine; by JMJD6; alternate modification. Lysine 15 participates in a covalent cross-link: Glycyl lysine isopeptide (Lys-Gly) (interchain with G-Cter in SUMO2); alternate. Residues 17 to 47 are necessary and sufficient to stimulate pre-mRNAs 3'-end cleavage in a CFIm complex-dependent manner; that stretch reads ERDKENRHRKRSHSRSRSRDRKRRSRSRDRR. The segment covering 23–46 has biased composition (basic residues); the sequence is RHRKRSHSRSRSRDRKRRSRSRDR. The span at 47-56 shows a compositional bias: basic and acidic residues; it reads RNRDQRSASR. Residue lysine 70 forms a Glycyl lysine isopeptide (Lys-Gly) (interchain with G-Cter in SUMO2); alternate linkage. Lysine 70 is subject to N6-acetyllysine; alternate. The residue at position 79 (serine 79) is a Phosphoserine. Residues 79 to 89 are compositionally biased toward basic residues; it reads SPRHEKKKKVR. RRM domains lie at 149-231, 259-337, and 385-466; these read RRLY…RPHD, HKLF…RASV, and LPEE…YCDP. Lysine 276 is modified (5-hydroxylysine; by JMJD6). Residue serine 294 is modified to Phosphoserine.

This sequence belongs to the splicing factor SR family. As to quaternary structure, interacts with U2AF1L4. Heterodimer with U2AF1. Binds unphosphorylated SF1. Interacts with SCAF11 and SNW1. Interacts with ZRSR2/U2AF1-RS2. Interacts with RBM17. Interacts with PRPF19; the interaction is direct. Interacts with POLR2A (via the C-terminal domain); recruits PRPF19 and the Prp19 complex to the pre-mRNA. Interacts with KHDC4 (Isoform 2). Interacts with ZRSR2. Interacts with the SF3B complex composed of SF3B1, SF3B2, SF3B3, SF3B4, SF3B5, SF3B6 and PHF5A. Interacts (via N-terminus) with CPSF7 (via C-terminus); this interaction stimulates pre-mRNA 3'-end processing by promoting the recruitment of the CFIm complex to cleavage and polyadenylation signals. Interacts with ARGLU1; interaction may be involved in ARGLU1-mediated modulation of alternative splicing. Lysyl-hydroxylation at Lys-15 and Lys-276 affects the mRNA splicing activity of the protein, leading to regulate some, but not all, alternative splicing events.

The protein localises to the nucleus. In terms of biological role, plays a role in pre-mRNA splicing and 3'-end processing. By recruiting PRPF19 and the PRP19C/Prp19 complex/NTC/Nineteen complex to the RNA polymerase II C-terminal domain (CTD), and thereby pre-mRNA, may couple transcription to splicing. Induces cardiac troponin-T (TNNT2) pre-mRNA exon inclusion in muscle. Regulates the TNNT2 exon 5 inclusion through competition with MBNL1. Binds preferentially to a single-stranded structure within the polypyrimidine tract of TNNT2 intron 4 during spliceosome assembly. Required for the export of mRNA out of the nucleus, even if the mRNA is encoded by an intron-less gene. Represses the splicing of MAPT/Tau exon 10. Positively regulates pre-mRNA 3'-end processing by recruiting the CFIm complex to cleavage and polyadenylation signals. In Homo sapiens (Human), this protein is Splicing factor U2AF 65 kDa subunit (U2AF2).